The primary structure comprises 316 residues: UDP-N-acetylglucosamine transporter yea4 (316 aa).

Residues 1–3 (MIA) lie on the Cytoplasmic side of the membrane. A helical membrane pass occupies residues 4-24 (SALSFIFGGCCSNAYALEALV). The Lumenal segment spans residues 25–31 (REFPSSG). The helical transmembrane segment at 32–52 (ILITFSQFILITIEGLIYFLL) threads the bilayer. At 53 to 67 (NDVQSLKHPKVPRKR) the chain is on the cytoplasmic side. The chain crosses the membrane as a helical span at residues 68–88 (WFVVVVMFFAINVLNNVALGF). The Lumenal segment spans residues 89–120 (DISVPVHIILRSSGPLTTMAVGRILAGKRYSS). The helical transmembrane segment at 121–141 (LQIGSVFILTIGVIIATLGNA) threads the bilayer. The Cytoplasmic portion of the chain corresponds to 142–153 (KDLHLHVESMTR). The chain crosses the membrane as a helical span at residues 154–174 (FGIGFTILVITQILGAIMGLV). The Lumenal portion of the chain corresponds to 175-187 (LENTYRIYGSDWR). Residues 188 to 208 (ESLFYTHALSLPFFLFLLRPI) traverse the membrane as a helical segment. The Cytoplasmic portion of the chain corresponds to 209 to 214 (RSQWND). The helical transmembrane segment at 215–235 (LFAIHTKGFLNLPSGVWYLCF) threads the bilayer. The Lumenal portion of the chain corresponds to 236–274 (NTLAQYFCVRGVNALGAETSALTVSVVLNVRKFVSLCLS). The chain crosses the membrane as a helical span at residues 275-295 (LILFENEMGPAVKFGALLVFG). Topologically, residues 296 to 316 (SSAVYASARSKPKTNGLKKND) are cytoplasmic.

It belongs to the nucleotide-sugar transporter family. SLC35B subfamily.

Its subcellular location is the endoplasmic reticulum. The protein localises to the endoplasmic reticulum membrane. Functionally, sugar transporter that specifically mediates the transport of UDP-N-acetylglucosamine (UDP-GlcNAc) and is required for cell wall chitin synthesis. The protein is UDP-N-acetylglucosamine transporter yea4 (yea4) of Schizosaccharomyces pombe (strain 972 / ATCC 24843) (Fission yeast).